A 634-amino-acid chain; its full sequence is tRNA uridine 5-carboxymethylaminomethyl modification enzyme MnmG (634 aa).

13–18 is an FAD binding site; the sequence is GAGHAG. 273–287 contacts NAD(+); it reads GPRYCPSIEDKIIKF.

The protein belongs to the MnmG family. As to quaternary structure, homodimer. Heterotetramer of two MnmE and two MnmG subunits. The cofactor is FAD.

The protein resides in the cytoplasm. Its function is as follows. NAD-binding protein involved in the addition of a carboxymethylaminomethyl (cmnm) group at the wobble position (U34) of certain tRNAs, forming tRNA-cmnm(5)s(2)U34. This chain is tRNA uridine 5-carboxymethylaminomethyl modification enzyme MnmG, found in Buchnera aphidicola subsp. Cinara cedri (strain Cc).